The primary structure comprises 111 residues: uncharacterized protein (111 aa).

The chain crosses the membrane as a helical span at residues 48–70 (LFLVPFPASFTRWLTFLFHLVIY).

It is found in the membrane. This is an uncharacterized protein from Saccharomyces cerevisiae (strain ATCC 204508 / S288c) (Baker's yeast).